We begin with the raw amino-acid sequence, 299 residues long: tRNA dimethylallyltransferase (299 aa).

13 to 20 (GPTASGKT) serves as a coordination point for ATP. Residue 15–20 (TASGKT) participates in substrate binding. The interval 38–41 (DSRQ) is interaction with substrate tRNA.

The protein belongs to the IPP transferase family. As to quaternary structure, monomer. Mg(2+) is required as a cofactor.

The catalysed reaction is adenosine(37) in tRNA + dimethylallyl diphosphate = N(6)-dimethylallyladenosine(37) in tRNA + diphosphate. Catalyzes the transfer of a dimethylallyl group onto the adenine at position 37 in tRNAs that read codons beginning with uridine, leading to the formation of N6-(dimethylallyl)adenosine (i(6)A). This Prochlorococcus marinus subsp. pastoris (strain CCMP1986 / NIES-2087 / MED4) protein is tRNA dimethylallyltransferase.